Here is a 1402-residue protein sequence, read N- to C-terminus: Transcription elongation factor spt-6 (1402 aa).

Residues 1 to 199 (MSNSMRDLID…PKDRGLNIDT (199 aa)) are disordered. Composition is skewed to acidic residues over residues 10–28 (DGEA…DEEA), 40–52 (DSSE…EDEE), 62–75 (IVDE…EDSD), and 90–102 (EEEE…DLDL). Basic and acidic residues predominate over residues 123–135 (HRDDHRPTERRGL). Acidic residues predominate over residues 161–176 (DEFDDFIEDDYPEDDE). Residues 177–199 (ERRHREEDEEVARPKDRGLNIDT) show a composition bias toward basic and acidic residues. One can recognise an S1 motif domain in the interval 1094–1161 (GMIVAANVRV…KEFVSKLSMR (68 aa)). An SH2 domain is found at 1209–1306 (PLFKPFNSTQ…KKVDELMQCD (98 aa)).

Belongs to the SPT6 family.

It is found in the nucleus. Its subcellular location is the chromosome. Its function is as follows. Histone H3-H4 chaperone that plays a role in maintenance of chromatin structure during RNA polymerase II transcription elongation thereby repressing transcription initiation from cryptic promoters. Mediates the reassembly of nucleosomes onto the promoters of at least a selected set of genes during repression; the nucleosome reassembly is essential for transcriptional repression. Essential for viability. The polypeptide is Transcription elongation factor spt-6 (spt-6) (Neurospora crassa (strain ATCC 24698 / 74-OR23-1A / CBS 708.71 / DSM 1257 / FGSC 987)).